Consider the following 576-residue polypeptide: Proline--tRNA ligase (576 aa).

It belongs to the class-II aminoacyl-tRNA synthetase family. ProS type 1 subfamily. In terms of assembly, homodimer.

It localises to the cytoplasm. It carries out the reaction tRNA(Pro) + L-proline + ATP = L-prolyl-tRNA(Pro) + AMP + diphosphate. Its function is as follows. Catalyzes the attachment of proline to tRNA(Pro) in a two-step reaction: proline is first activated by ATP to form Pro-AMP and then transferred to the acceptor end of tRNA(Pro). As ProRS can inadvertently accommodate and process non-cognate amino acids such as alanine and cysteine, to avoid such errors it has two additional distinct editing activities against alanine. One activity is designated as 'pretransfer' editing and involves the tRNA(Pro)-independent hydrolysis of activated Ala-AMP. The other activity is designated 'posttransfer' editing and involves deacylation of mischarged Ala-tRNA(Pro). The misacylated Cys-tRNA(Pro) is not edited by ProRS. The chain is Proline--tRNA ligase from Finegoldia magna (strain ATCC 29328 / DSM 20472 / WAL 2508) (Peptostreptococcus magnus).